The sequence spans 135 residues: Protein NrdI (135 aa).

It belongs to the NrdI family.

In terms of biological role, probably involved in ribonucleotide reductase function. The sequence is that of Protein NrdI from Rhizobium johnstonii (strain DSM 114642 / LMG 32736 / 3841) (Rhizobium leguminosarum bv. viciae).